Reading from the N-terminus, the 522-residue chain is Signal transduction histidine-protein kinase/phosphatase MprB (522 aa).

Residues 1–30 lie on the Cytoplasmic side of the membrane; that stretch reads MIRLYRPQRPPLRAPLRATPSLSLRWRVML. Residues 31 to 51 form a helical membrane-spanning segment; sequence LAMSMVAMVVVLMAFAVYAVI. Over 52-167 the chain is Extracellular; sequence SAALYSDIDN…PTEAVMNKLR (116 aa). Residues 168–188 form a helical membrane-spanning segment; that stretch reads WVLLIVGGVGVAVAAVAGGMV. At 189-522 the chain is on the cytoplasmic side; sequence TRAGLRPVAR…SVDSQSARAR (334 aa). Positions 190-242 constitute an HAMP domain; it reads RAGLRPVARLTEAAERVARTDDLRPIPVFGSDELARLTESFNLMLRALAESRE. Residues 250-470 enclose the Histidine kinase domain; the sequence is DAGHELRTPL…SFYVLLPGRS (221 aa). Histidine 253 carries the post-translational modification Phosphohistidine; by autocatalysis. Residues 467–522 are disordered; sequence PGRSLPPAGHSTPAGESETDQAEAATDPAVPVAGDTANSRESANVISVDSQSARAR. The span at 502–522 shows a compositional bias: polar residues; it reads TANSRESANVISVDSQSARAR.

Requires Mg(2+) as cofactor. The cofactor is Mn(2+). In terms of processing, autophosphorylated.

Its subcellular location is the cell membrane. The enzyme catalyses ATP + protein L-histidine = ADP + protein N-phospho-L-histidine.. Functionally, member of the two-component regulatory system MprB/MprA which contributes to maintaining a balance among several systems involved in stress resistance and is required for establishment and maintenance of persistent infection in the host. In response to environmental signals MprB acts both as a membrane-associated protein kinase that undergoes autophosphorylation and subsequently transfers the phosphate to MprA, and a protein phosphatase that dephosphorylates phospho-MprA. The chain is Signal transduction histidine-protein kinase/phosphatase MprB (mprB) from Mycolicibacterium paratuberculosis (strain ATCC BAA-968 / K-10) (Mycobacterium paratuberculosis).